Consider the following 704-residue polypeptide: Arylphorin (704 aa).

Positions 1 to 16 (MKIVLVLAGLIALVQS) are cleaved as a signal peptide. Asparagine 73, asparagine 212, and asparagine 360 each carry an N-linked (GlcNAc...) asparagine glycan.

This sequence belongs to the hemocyanin family. In terms of assembly, homohexamer of two stacked trimers; disulfide-linked. Post-translationally, glycosylation at Asn-360 is required for proper folding.

The protein localises to the secreted. It is found in the extracellular space. Functionally, arylphorin is a larval storage protein (LSP) which may serve as a storage protein used primarily as a source of aromatic amino acids for protein synthesis during metamorphosis. It is a constituent of the sclerotizing system of the cuticle, and serves as a carrier for ecdysteroid hormone. This is Arylphorin from Antheraea pernyi (Chinese oak silk moth).